Here is a 565-residue protein sequence, read N- to C-terminus: Proline--tRNA ligase (565 aa).

This sequence belongs to the class-II aminoacyl-tRNA synthetase family. ProS type 1 subfamily. Homodimer.

The protein localises to the cytoplasm. The catalysed reaction is tRNA(Pro) + L-proline + ATP = L-prolyl-tRNA(Pro) + AMP + diphosphate. Its function is as follows. Catalyzes the attachment of proline to tRNA(Pro) in a two-step reaction: proline is first activated by ATP to form Pro-AMP and then transferred to the acceptor end of tRNA(Pro). As ProRS can inadvertently accommodate and process non-cognate amino acids such as alanine and cysteine, to avoid such errors it has two additional distinct editing activities against alanine. One activity is designated as 'pretransfer' editing and involves the tRNA(Pro)-independent hydrolysis of activated Ala-AMP. The other activity is designated 'posttransfer' editing and involves deacylation of mischarged Ala-tRNA(Pro). The misacylated Cys-tRNA(Pro) is not edited by ProRS. This is Proline--tRNA ligase from Lactobacillus johnsonii (strain CNCM I-12250 / La1 / NCC 533).